Consider the following 198-residue polypeptide: Inositol diphosphatase DSP4 (198 aa).

A disordered region spans residues 1 to 23; that stretch reads MTLESYAGDVHTVPQSENSMEER. The 155-residue stretch at 34–188 folds into the Tyrosine-protein phosphatase domain; sequence NFAMVDNGIF…LKHTPLSFSC (155 aa). The interval 90-102 is WPD loop important for active site topology; that stretch reads FGIERCKEPFVNI. Positions 101 and 102 each coordinate 1D-myo-inositol hexakisphosphate. Residue C126 is the Phosphocysteine intermediate of the active site.

The protein belongs to the protein-tyrosine phosphatase family. Atypical dual-specificity phosphatase Siw14-like subfamily. In terms of tissue distribution, highly expressed in flowers and at lower levels in roots, leaves, stems and siliques.

The catalysed reaction is 5-diphospho-1D-myo-inositol 1,2,3,4,6-pentakisphosphate + H2O = 1D-myo-inositol hexakisphosphate + phosphate + H(+). It carries out the reaction 1,5-bis(diphospho)-1D-myo-inositol 2,3,4,6-tetrakisphosphate + H2O = 1-diphospho-1D-myo-inositol 2,3,4,5,6-pentakisphosphate + phosphate + 2 H(+). It catalyses the reaction 3,5-bis(diphospho)-1D-myo-inositol 1,2,4,6-tetrakisphosphate + H2O = 3-diphospho-1D-myo-inositol 1,2,4,5,6-pentakisphosphate + phosphate + 2 H(+). The enzyme catalyses 6-diphospho-1D-myo-inositol pentakisphosphate + H2O = 1D-myo-inositol hexakisphosphate + phosphate + H(+). Its function is as follows. Cleaves the beta-phosphate at the 5-position of soluble inositol pyrophosphates. Has highest activity on 5-diphosphoinositol 1,2,3,4,6-pentakisphosphate (5-InsP(7)), 1,5-bis-diphosphoinositol 2,3,4,6-tetrakisphosphate (1,5-InsP(8)) and 3,5-InsP(8). Acts as a negative regulator of defense responses against the bacterial pathogen Pseudomonas syringae pv tomato strain DC3000. The protein is Inositol diphosphatase DSP4 of Arabidopsis thaliana (Mouse-ear cress).